We begin with the raw amino-acid sequence, 222 residues long: Pyridoxine/pyridoxamine 5'-phosphate oxidase (222 aa).

Substrate contacts are provided by residues Arg-11–Tyr-14 and Lys-79. Residues Arg-74–Lys-79, Tyr-89–Thr-90, Lys-96, and Gln-118 contribute to the FMN site. Residues Tyr-136, Arg-140, and Ser-144 each contribute to the substrate site. FMN is bound by residues Gln-153–Ser-154 and Trp-199. Arg-205–His-207 serves as a coordination point for substrate. Arg-209 contacts FMN.

This sequence belongs to the pyridoxamine 5'-phosphate oxidase family. In terms of assembly, homodimer. It depends on FMN as a cofactor.

The enzyme catalyses pyridoxamine 5'-phosphate + O2 + H2O = pyridoxal 5'-phosphate + H2O2 + NH4(+). It carries out the reaction pyridoxine 5'-phosphate + O2 = pyridoxal 5'-phosphate + H2O2. Its pathway is cofactor metabolism; pyridoxal 5'-phosphate salvage; pyridoxal 5'-phosphate from pyridoxamine 5'-phosphate: step 1/1. It participates in cofactor metabolism; pyridoxal 5'-phosphate salvage; pyridoxal 5'-phosphate from pyridoxine 5'-phosphate: step 1/1. Catalyzes the oxidation of either pyridoxine 5'-phosphate (PNP) or pyridoxamine 5'-phosphate (PMP) into pyridoxal 5'-phosphate (PLP). This chain is Pyridoxine/pyridoxamine 5'-phosphate oxidase, found in Mycolicibacterium vanbaalenii (strain DSM 7251 / JCM 13017 / BCRC 16820 / KCTC 9966 / NRRL B-24157 / PYR-1) (Mycobacterium vanbaalenii).